The primary structure comprises 452 residues: UDP-glycosyltransferase 76E4 (452 aa).

Residues Thr-274, 333–335, 350–358, and 372–375 contribute to the UDP-alpha-D-glucose site; these read APQ, HCGWNSTLE, and QGEQ.

This sequence belongs to the UDP-glycosyltransferase family.

This chain is UDP-glycosyltransferase 76E4 (UGT76E4), found in Arabidopsis thaliana (Mouse-ear cress).